A 248-amino-acid polypeptide reads, in one-letter code: tRNA pseudouridine synthase A (248 aa).

The active-site Nucleophile is the D53. Substrate is bound at residue Y111.

This sequence belongs to the tRNA pseudouridine synthase TruA family. As to quaternary structure, homodimer.

It catalyses the reaction uridine(38/39/40) in tRNA = pseudouridine(38/39/40) in tRNA. Formation of pseudouridine at positions 38, 39 and 40 in the anticodon stem and loop of transfer RNAs. The polypeptide is tRNA pseudouridine synthase A (Streptococcus thermophilus (strain CNRZ 1066)).